A 620-amino-acid chain; its full sequence is Threonine--tRNA ligase (620 aa).

The interval 1–141 (MKMLLIHSDY…LSRKIVAKEE (141 aa)) is editing domain. A catalytic region spans residues 197–496 (PHVKFIKEKD…AEKGNAPMLP (300 aa)). Cys-289, His-341, and His-465 together coordinate Zn(2+).

This sequence belongs to the class-II aminoacyl-tRNA synthetase family. As to quaternary structure, homodimer. It depends on Zn(2+) as a cofactor.

Its subcellular location is the cytoplasm. The enzyme catalyses tRNA(Thr) + L-threonine + ATP = L-threonyl-tRNA(Thr) + AMP + diphosphate + H(+). Not inhibited by 1 uM borrelidin (BN); probably does not bind BN. Functionally, catalyzes the attachment of threonine to tRNA(Thr) in a two-step reaction: L-threonine is first activated by ATP to form Thr-AMP and then transferred to the acceptor end of tRNA(Thr). Also activates L-serine, but does not detectably transfer it to tRNA(Thr). Edits incorrectly charged L-seryl-tRNA(Thr) via its editing domain. Has no activity on correctly acylated L-seryl-tRNA(Ser) or L-threonyl-tRNA(Thr). Deacylates correctly charged glycyl-tRNA(Gly), but not glycyl-tRNA(Gly)(2'-dA76) (the terminal 2'-OH of tRNA adenine 76 has been dehydroxylated) nor the 2'-fluoro tRNA derivative, strongly suggesting the editing function is tRNA catalyzed. This chain is Threonine--tRNA ligase, found in Methanocaldococcus jannaschii (strain ATCC 43067 / DSM 2661 / JAL-1 / JCM 10045 / NBRC 100440) (Methanococcus jannaschii).